Consider the following 88-residue polypeptide: Sec-independent protein translocase protein TatA (88 aa).

A helical membrane pass occupies residues 1 to 21 (MGGASIWHWIVVGVIVMLLFG). The tract at residues 62–88 (TEPVRTLPPHPTEPAPATHATVDRKVV) is disordered.

Belongs to the TatA/E family. As to quaternary structure, the Tat system comprises two distinct complexes: a TatABC complex, containing multiple copies of TatA, TatB and TatC subunits, and a separate TatA complex, containing only TatA subunits. Substrates initially bind to the TatABC complex, which probably triggers association of the separate TatA complex to form the active translocon.

Its subcellular location is the cell inner membrane. In terms of biological role, part of the twin-arginine translocation (Tat) system that transports large folded proteins containing a characteristic twin-arginine motif in their signal peptide across membranes. TatA could form the protein-conducting channel of the Tat system. The chain is Sec-independent protein translocase protein TatA from Methylobacterium sp. (strain 4-46).